The sequence spans 204 residues: FMN-dependent NADH:quinone oxidoreductase 2 (204 aa).

FMN-binding positions include S10 and 16-18 (SIS).

It belongs to the azoreductase type 1 family. Homodimer. FMN serves as cofactor.

The enzyme catalyses 2 a quinone + NADH + H(+) = 2 a 1,4-benzosemiquinone + NAD(+). It catalyses the reaction N,N-dimethyl-1,4-phenylenediamine + anthranilate + 2 NAD(+) = 2-(4-dimethylaminophenyl)diazenylbenzoate + 2 NADH + 2 H(+). In terms of biological role, quinone reductase that provides resistance to thiol-specific stress caused by electrophilic quinones. Its function is as follows. Also exhibits azoreductase activity. Catalyzes the reductive cleavage of the azo bond in aromatic azo compounds to the corresponding amines. In Jannaschia sp. (strain CCS1), this protein is FMN-dependent NADH:quinone oxidoreductase 2.